The chain runs to 136 residues: Large ribosomal subunit protein uL16 (136 aa).

It belongs to the universal ribosomal protein uL16 family. As to quaternary structure, part of the 50S ribosomal subunit.

Its function is as follows. Binds 23S rRNA and is also seen to make contacts with the A and possibly P site tRNAs. This chain is Large ribosomal subunit protein uL16, found in Glaesserella parasuis serovar 5 (strain SH0165) (Haemophilus parasuis).